Consider the following 313-residue polypeptide: Olfactory receptor 4M1 (313 aa).

The Extracellular segment spans residues 1 to 25 (MEPANDTTVTEFILTGLSQTREVQL). The N-linked (GlcNAc...) asparagine glycan is linked to Asn-5. The helical transmembrane segment at 26-46 (VLFVIFLSFYLFILPVNILII) threads the bilayer. Residues 47–57 (CTIRLDSHLSS) lie on the Cytoplasmic side of the membrane. The helical transmembrane segment at 58 to 78 (PMYFLLANLAFLDIWYSSITA) threads the bilayer. At 79–97 (PKMLVDFFVERKIISFGGC) the chain is on the extracellular side. Cys-97 and Cys-179 are joined by a disulfide. Residues 98-118 (IAQLFFLHFVGASEMFLLTVM) traverse the membrane as a helical segment. Over 119 to 142 (AFDRYAAICRPLHYATIMNRRLCC) the chain is Cytoplasmic. A helical membrane pass occupies residues 143–163 (ILVALSWTGGFVHSIIQVALI). The Extracellular segment spans residues 164–204 (VRLPFCGPNELDNYFCDITQVVRIACANTFLEEMVMIFSSG). The chain crosses the membrane as a helical span at residues 205-225 (LISVVCFIALLMSYAFLLTML). Residues 226 to 238 (KKHSSSGESTSRA) lie on the Cytoplasmic side of the membrane. Residues 239–259 (ISTCYSHITIVVLMFGPSIYI) traverse the membrane as a helical segment. Residues 260-270 (YARPFDSFSLD) lie on the Extracellular side of the membrane. The chain crosses the membrane as a helical span at residues 271-291 (KVVSVFHTVIFPLLNPIIYTL). Residues 292 to 313 (RNKEVKAAMRKLVNRYIFCKEK) are Cytoplasmic-facing.

This sequence belongs to the G-protein coupled receptor 1 family. As to expression, highly expressed in liver but not in adipose tissue. Also expressed at high level in testis.

The protein resides in the cell membrane. Functionally, olfactory receptor that acts as a receptor of Asprosin hormone at the surface of hepatocytes to promote hepatocyte glucose release. Also binds Asprosin in the arcuate nucleus of the hypothalamus, thereby stimulating appetite by promoting orexigenic AgRP neuronal activity. In testis, Asprosin-binding promotes sperm progressive motility and enhances male fertility. The activity of this receptor is mediated by G proteins which activate adenylyl cyclase, resulting in an elevation of intracellular cAMP. The sequence is that of Olfactory receptor 4M1 from Mus musculus (Mouse).